The following is a 1187-amino-acid chain: Myelin transcription factor 1-like protein (1187 aa).

Positions 1-22 are disordered; the sequence is MDVDSEEKRHRTRSKGVRVPVE. A CCHHC-type 1 zinc finger spans residues 22-65; sequence EPAIQELFSCPTPGCDGSGHVSGKYARHRSVYGCPLAKKRKTQD. Zn(2+)-binding residues include cysteine 31, cysteine 36, histidine 49, and cysteine 55. Disordered regions lie at residues 56–178 and 221–248; these read PLAK…QMSC and RTES…GRKS. Acidic residues predominate over residues 89–172; that stretch reads ECYESDGTED…EEEEEEEENE (84 aa). Residue serine 251 is modified to Phosphoserine. Disordered regions lie at residues 343–422 and 450–514; these read SETN…DRSE and REKM…GCDG. Positions 344–358 are enriched in polar residues; the sequence is ETNPQDRSQPPNMSV. 4 stretches are compositionally biased toward basic and acidic residues: residues 362-377, 401-412, 450-488, and 496-506; these read VRQE…DRSY, AKEDGCHERDDD, REKM…DSHV, and DPSRTEKRESK. 2 consecutive CCHHC-type zinc fingers follow at residues 498–541 and 542–585; these read SRTE…PPEI and LAMH…KLAK. Zn(2+) is bound by residues cysteine 507, cysteine 512, histidine 525, cysteine 531, cysteine 551, cysteine 556, histidine 569, and cysteine 575. Positions 686–710 are disordered; the sequence is ASPSSSTTSSYAPSSSSNLSCGGGS. 3 CCHHC-type zinc fingers span residues 897 to 940, 946 to 989, and 999 to 1042; these read LATS…GIRI, DKED…QKDG, and KSVK…MKKA. Zn(2+) is bound by residues cysteine 906, cysteine 911, histidine 924, cysteine 930, cysteine 955, cysteine 960, histidine 973, cysteine 979, cysteine 1008, cysteine 1013, histidine 1026, and cysteine 1032. Positions 1058-1132 form a coiled coil; the sequence is NGIENDEEIK…ANLSQSLIHS (75 aa).

Belongs to the MYT1 family. Interacts with SIN3B. As to expression, brain.

It localises to the nucleus. The protein localises to the chromosome. Its function is as follows. Transcription factor that plays a key role in neuronal differentiation by specifically repressing expression of non-neuronal genes during neuron differentiation. In contrast to other transcription repressors that inhibit specific lineages, mediates repression of multiple differentiation programs. Also represses expression of negative regulators of neurogenesis, such as members of the Notch signaling pathway, including HES1. The combination of three transcription factors, ASCL1, POU3F2/BRN2 and MYT1L, is sufficient to reprogram fibroblasts and other somatic cells into induced neuronal (iN) cells in vitro. Directly binds the 5'-AAGTT-3' core motif present on the promoter of target genes and represses transcription by recruiting a multiprotein complex containing SIN3B. The 5'-AAGTT-3' core motif is absent from the promoter of neural genes. This is Myelin transcription factor 1-like protein from Mus musculus (Mouse).